The following is a 558-amino-acid chain: Atlastin-1 (558 aa).

The tract at residues 1–27 is disordered; the sequence is MAKNRRDRNSWGGFSEKTYEWSSEEEE. Residues 1 to 34 are N-terminal hypervariable region (HVR); it reads MAKNRRDRNSWGGFSEKTYEWSSEEEEPVKKAGP. The Cytoplasmic segment spans residues 1 to 449; sequence MAKNRRDRNS…NIFHAARTPA (449 aa). Residues Ser-10, Ser-22, and Ser-23 each carry the phosphoserine modification. Residues 64 to 309 enclose the GB1/RHD3-type G domain; that stretch reads DKEVVAVSVA…LIPWLLSPES (246 aa). GDP is bound by residues Arg-77, Lys-78, Gly-79, Lys-80, Ser-81, Phe-82, Gln-148, Arg-217, Asp-218, Val-276, and Asn-279. GTP contacts are provided by Arg-77, Lys-78, Gly-79, Lys-80, Ser-81, and Phe-82. Ser-81 contributes to the Mg(2+) binding site. GTP contacts are provided by Arg-217, Asp-218, and Val-276. The 3HB (three-helix bundle) domain stretch occupies residues 347 to 438; sequence MLQATAEANN…YIQYIKHNDS (92 aa). N6-acetyllysine is present on Lys-395. Residues 412–439 adopt a coiled-coil conformation; sequence EFSRRYLQQLESEIDELYIQYIKHNDSK. The tract at residues 439–447 is linker; it reads KNIFHAART. A helical transmembrane segment spans residues 450–470; sequence TLFVVIFITYVIAGVTGFIGL. Position 471 (Asp-471) is a topological domain, lumenal. Residues 472–492 form a helical membrane-spanning segment; sequence IIASLCNMIMGLTLITLCTWA. The Cytoplasmic portion of the chain corresponds to 493–558; it reads YIRYSGEYRE…STEQSEKKKM (66 aa). The segment at 521 to 558 is autoinhibitory domain; it reads NEALYKLYSAAATHRHLYHQAFPTPKSESTEQSEKKKM.

The protein belongs to the TRAFAC class dynamin-like GTPase superfamily. GB1/RHD3 GTPase family. GB1 subfamily. In terms of assembly, monomeric and homodimeric. The homodimer, transiently formed by two molecules on opposing membranes, is the active form mediating ER membrane fusion. Interacts with REEP1, REEP5, RTN3 and RTN4 (via the transmembrane region); these proteins are involved in endoplasmic reticulum tubular network organization. Interacts with ZFYVE27; both proteins are involved in endoplasmic reticulum tubular network organization. Interacts with ARL6IP1; both proteins are involved in endoplasmic reticulum tubular network organization. Interacts with SPAST; the interaction is direct, could recruit SPAST to Golgi membranes. Interacts (via N-terminal region) with MAP4K4 (via CNH regulatory domain). May interact with TMED2. Interacts with CPT1C. Post-translationally, phosphorylated. Phosphorylation, by different kinases, of the N-terminal hypervariable region (HVR) regulates the ATL1-mediated membrane tethering step.

The protein resides in the endoplasmic reticulum membrane. It localises to the golgi apparatus membrane. Its subcellular location is the cell projection. The protein localises to the axon. The catalysed reaction is GTP + H2O = GDP + phosphate + H(+). Atlastin-1 (ATL1) is a membrane-anchored GTPase that mediates the GTP-dependent fusion of endoplasmic reticulum (ER) membranes, maintaining the continuous ER network. It facilitates the formation of three-way junctions where ER tubules intersect. Two atlastin-1 on neighboring ER tubules bind GTP and form loose homodimers through the GB1/RHD3-type G domains and 3HB regions. Upon GTP hydrolysis, the 3HB regions tighten, pulling the membranes together to drive their fusion. After fusion, the homodimer disassembles upon release of inorganic phosphate (Pi). Subsequently, GDP dissociates, resetting the monomers to a conformation ready for a new fusion cycle. May also regulate more or less directly Golgi biogenesis. Indirectly regulates axonal development. This chain is Atlastin-1, found in Pongo abelii (Sumatran orangutan).